The chain runs to 551 residues: HTH-type transcriptional regulator SgrR (551 aa).

An HTH marR-type domain is found at 1–116 (MPSARLQQQF…LVSHLGRSFR (116 aa)). The segment at residues 26–49 (LNELAALLSCSRRHMRTLLNTMQD) is a DNA-binding region (H-T-H motif). The segment at 163-492 (ELEADIAHHW…IDWQADAARW (330 aa)) is solute-binding.

In terms of biological role, activates the small RNA gene sgrS under glucose-phosphate stress conditions as well as yfdZ. Represses its own transcription under both stress and non-stress conditions. Might act as a sensor of the intracellular accumulation of phosphoglucose by binding these molecules in its C-terminal solute-binding domain. The polypeptide is HTH-type transcriptional regulator SgrR (Shigella boydii serotype 4 (strain Sb227)).